The sequence spans 552 residues: Amino-acid acetyltransferase, mitochondrial (552 aa).

The transit peptide at 1–32 (MIKTWIRCLTTEVRYHQPNAHGRSLVMSVLNS) directs the protein to the mitochondrion. The N-acetyltransferase domain maps to 379 to 545 (QTGKSDPVSK…LRDYAKYVRD (167 aa)).

The protein belongs to the acetyltransferase family.

It localises to the mitochondrion. It catalyses the reaction L-glutamate + acetyl-CoA = N-acetyl-L-glutamate + CoA + H(+). It functions in the pathway amino-acid biosynthesis; L-arginine biosynthesis; N(2)-acetyl-L-ornithine from L-glutamate: step 1/4. N-acetylglutamate synthase involved in arginine biosynthesis. The chain is Amino-acid acetyltransferase, mitochondrial (ARG2) from Kluyveromyces lactis (strain ATCC 8585 / CBS 2359 / DSM 70799 / NBRC 1267 / NRRL Y-1140 / WM37) (Yeast).